A 328-amino-acid polypeptide reads, in one-letter code: Malate dehydrogenase (328 aa).

12-18 (GAAGQIG) lines the NAD(+) pocket. Positions 95 and 101 each coordinate substrate. NAD(+)-binding positions include Asn108, Gln115, and 132-134 (VGN). Residues Asn134 and Arg165 each contribute to the substrate site. His190 (proton acceptor) is an active-site residue.

It belongs to the LDH/MDH superfamily. MDH type 2 family.

It carries out the reaction (S)-malate + NAD(+) = oxaloacetate + NADH + H(+). Functionally, catalyzes the reversible oxidation of malate to oxaloacetate. The sequence is that of Malate dehydrogenase from Variovorax paradoxus (strain S110).